Here is a 147-residue protein sequence, read N- to C-terminus: Peptide methionine sulfoxide reductase MsrB 2 (147 aa).

One can recognise a MsrB domain in the interval 6–129 (TDEEVSKLTP…NSAALRFIPR (124 aa)). C118 acts as the Nucleophile in catalysis.

This sequence belongs to the MsrB Met sulfoxide reductase family.

The catalysed reaction is L-methionyl-[protein] + [thioredoxin]-disulfide + H2O = L-methionyl-(R)-S-oxide-[protein] + [thioredoxin]-dithiol. This Rhizobium meliloti (strain 1021) (Ensifer meliloti) protein is Peptide methionine sulfoxide reductase MsrB 2 (msrB2).